Here is a 361-residue protein sequence, read N- to C-terminus: GTP 3',8-cyclase (361 aa).

The tract at residues 1–30 (MTVTALGLPTVARSTGDGSAGASPAPADGP) is disordered. Residues 16-30 (GDGSAGASPAPADGP) are compositionally biased toward low complexity. The Radical SAM core domain occupies 34–252 (TYGRAATDLR…LQQHFELTPD (219 aa)). R43 serves as a coordination point for GTP. Residues C50 and C54 each contribute to the [4Fe-4S] cluster site. Y56 is a binding site for S-adenosyl-L-methionine. Residue C57 coordinates [4Fe-4S] cluster. A GTP-binding site is contributed by R94. G98 contributes to the S-adenosyl-L-methionine binding site. T125 provides a ligand contact to GTP. S149 contacts S-adenosyl-L-methionine. A GTP-binding site is contributed by K186. M220 is an S-adenosyl-L-methionine binding site. [4Fe-4S] cluster contacts are provided by C288 and C291. 293–295 (RTR) lines the GTP pocket. C305 lines the [4Fe-4S] cluster pocket.

Belongs to the radical SAM superfamily. MoaA family. In terms of assembly, monomer and homodimer. Requires [4Fe-4S] cluster as cofactor.

It carries out the reaction GTP + AH2 + S-adenosyl-L-methionine = (8S)-3',8-cyclo-7,8-dihydroguanosine 5'-triphosphate + 5'-deoxyadenosine + L-methionine + A + H(+). Its pathway is cofactor biosynthesis; molybdopterin biosynthesis. Functionally, catalyzes the cyclization of GTP to (8S)-3',8-cyclo-7,8-dihydroguanosine 5'-triphosphate. This Mycolicibacterium smegmatis (strain ATCC 700084 / mc(2)155) (Mycobacterium smegmatis) protein is GTP 3',8-cyclase.